The primary structure comprises 162 residues: NADH-quinone oxidoreductase subunit I (162 aa).

4Fe-4S ferredoxin-type domains follow at residues Leu-52–Gly-82 and Val-93–Asn-122. 8 residues coordinate [4Fe-4S] cluster: Cys-62, Cys-65, Cys-68, Cys-72, Cys-102, Cys-105, Cys-108, and Cys-112.

This sequence belongs to the complex I 23 kDa subunit family. As to quaternary structure, NDH-1 is composed of 14 different subunits. Subunits NuoA, H, J, K, L, M, N constitute the membrane sector of the complex. [4Fe-4S] cluster is required as a cofactor.

The protein resides in the cell inner membrane. The enzyme catalyses a quinone + NADH + 5 H(+)(in) = a quinol + NAD(+) + 4 H(+)(out). In terms of biological role, NDH-1 shuttles electrons from NADH, via FMN and iron-sulfur (Fe-S) centers, to quinones in the respiratory chain. The immediate electron acceptor for the enzyme in this species is believed to be ubiquinone. Couples the redox reaction to proton translocation (for every two electrons transferred, four hydrogen ions are translocated across the cytoplasmic membrane), and thus conserves the redox energy in a proton gradient. The chain is NADH-quinone oxidoreductase subunit I from Bradyrhizobium sp. (strain BTAi1 / ATCC BAA-1182).